The following is a 586-amino-acid chain: Ezrin (586 aa).

Positions 2–295 (PKPINVRVTT…GNHELYMRRR (294 aa)) constitute an FERM domain. An N6-acetyllysine modification is found at Lys60. The short motif at 115 to 120 (IYCPPE) is the [IL]-x-C-x-x-[DE] motif element. At Tyr146 the chain carries Phosphotyrosine; by PDGFR. Positions 244 to 586 (EIRNISFNDK…KQRIDEFEAM (343 aa)) are interaction with SCYL3. Positions 302–462 (VQQMKAQARE…QDDLVKTKEE (161 aa)) form a coiled coil. A disordered region spans residues 305–340 (MKAQAREEKHQKQLERQQLESEKKRREAVEQEKEQM). Residues 308 to 340 (QAREEKHQKQLERQQLESEKKRREAVEQEKEQM) show a composition bias toward basic and acidic residues. Tyr354 is modified (phosphotyrosine; by PDGFR). Ser366 bears the Phosphoserine mark. Tyr478 carries the post-translational modification Phosphotyrosine. The residue at position 535 (Ser535) is a Phosphoserine. Thr567 is subject to Phosphothreonine; by ROCK2 and PKC/PRKCI.

As to quaternary structure, interacts with PALS1. Found in a complex with EZR, PODXL and NHERF2. Interacts with MCC, PLEKHG6, PODXL, SCYL3/PACE1, NHERF1, NHERF2 and TMEM8B. Interacts (when phosphorylated) with FES/FPS. Interacts with dimeric S100P, the interaction may be activating through unmasking of F-actin binding sites. Identified in complexes that contain VIM, EZR, AHNAK, BFSP1, BFSP2, ANK2, PLEC, PRX and spectrin. Detected in a complex composed of at least EZR, AHNAK, PPL and PRX. Interacts with PDPN (via cytoplasmic domain); activates RHOA and promotes epithelial-mesenchymal transition. Interacts with SPN/CD43 cytoplasmic tail, CD44 and ICAM2. Interacts with SLC9A3; interaction targets SLC9A3 to the apical membrane. Interacts with SLC9A1; regulates interactions of SLC9A1 with cytoskeletal and promotes stress fiber formation. Interacts with CLIC5; may work together in a complex which also includes RDX and MYO6 to stabilize linkages between the plasma membrane and subjacent actin cytoskeleton at the base of stereocilia. Post-translationally, phosphorylated by tyrosine-protein kinases. Phosphorylation by ROCK2 suppresses the head-to-tail association of the N-terminal and C-terminal halves resulting in an opened conformation which is capable of actin and membrane-binding. In terms of processing, S-nitrosylation is induced by interferon-gamma and oxidatively-modified low-densitity lipoprotein (LDL(ox)) possibly implicating the iNOS-S100A8/9 transnitrosylase complex.

Its subcellular location is the apical cell membrane. It is found in the cell projection. The protein localises to the microvillus membrane. The protein resides in the ruffle membrane. It localises to the cytoplasm. Its subcellular location is the cell cortex. It is found in the cytoskeleton. The protein localises to the microvillus. A head-to-tail association, of the N-terminal and C-terminal halves results in a closed conformation (inactive form) which is incapable of actin or membrane-binding. Its function is as follows. Probably involved in connections of major cytoskeletal structures to the plasma membrane. In epithelial cells, required for the formation of microvilli and membrane ruffles on the apical pole. Along with PLEKHG6, required for normal macropinocytosis. The chain is Ezrin (EZR) from Oryctolagus cuniculus (Rabbit).